A 234-amino-acid polypeptide reads, in one-letter code: Orotidine 5'-phosphate decarboxylase (234 aa).

Residues aspartate 10, lysine 31, 58 to 67, threonine 121, arginine 183, glutamine 192, glycine 212, and arginine 213 each bind substrate; that span reads DLKLHDIPNT. Residue lysine 60 is the Proton donor of the active site.

This sequence belongs to the OMP decarboxylase family. Type 1 subfamily. Homodimer.

The catalysed reaction is orotidine 5'-phosphate + H(+) = UMP + CO2. It functions in the pathway pyrimidine metabolism; UMP biosynthesis via de novo pathway; UMP from orotate: step 2/2. Its function is as follows. Catalyzes the decarboxylation of orotidine 5'-monophosphate (OMP) to uridine 5'-monophosphate (UMP). The sequence is that of Orotidine 5'-phosphate decarboxylase from Halalkalibacterium halodurans (strain ATCC BAA-125 / DSM 18197 / FERM 7344 / JCM 9153 / C-125) (Bacillus halodurans).